Here is a 273-residue protein sequence, read N- to C-terminus: Putative phosphoenolpyruvate synthase regulatory protein (273 aa).

153-160 (GVSRSGKT) lines the ADP pocket.

The protein belongs to the pyruvate, phosphate/water dikinase regulatory protein family. PSRP subfamily.

The catalysed reaction is [pyruvate, water dikinase] + ADP = [pyruvate, water dikinase]-phosphate + AMP + H(+). The enzyme catalyses [pyruvate, water dikinase]-phosphate + phosphate + H(+) = [pyruvate, water dikinase] + diphosphate. Its function is as follows. Bifunctional serine/threonine kinase and phosphorylase involved in the regulation of the phosphoenolpyruvate synthase (PEPS) by catalyzing its phosphorylation/dephosphorylation. This Paracidovorax citrulli (strain AAC00-1) (Acidovorax citrulli) protein is Putative phosphoenolpyruvate synthase regulatory protein.